Consider the following 316-residue polypeptide: Phosphate acetyltransferase (316 aa).

This sequence belongs to the phosphate acetyltransferase and butyryltransferase family.

It localises to the cytoplasm. It catalyses the reaction acetyl-CoA + phosphate = acetyl phosphate + CoA. The protein operates within metabolic intermediate biosynthesis; acetyl-CoA biosynthesis; acetyl-CoA from acetate: step 2/2. The sequence is that of Phosphate acetyltransferase (pta) from Rhizobium meliloti (Ensifer meliloti).